Here is a 450-residue protein sequence, read N- to C-terminus: MADRLFGTDGLRGTVNTYPMTVDVALRLGLAAGIRFRRGQHQHKVVIGKDTRLSGYMFESALTAGLCAAGMHVIMTGPLPTPAISFLTRSMRADLGVVISASHNPFQDNGIKFFDADGYKLPDMAEDEIAAMVLDAGFSWPYPDSRGVGRATKIEDAGGRYIVYTKNCFPAHLTLSGLRIVVDCANGASYKVAPLALEELGAEVFRIGTGPDGTNINEHCGSLHPDVVAAKVREVRADIGLALDGDADRLIVVDERGVVLDGDQIMALCAQAMMARGELPGNLLVATAMSNMALELFMRDHGGQLLRTKVGDRYVMEAMRREGAMLGGEQSGHLIFHRYSTTGDGLLAALQILRIMREKERPLSELAGLLTPFPQKLINVRVEKRLPFEERPAIGEAVAQVEKELGGRGRVLLRYSGTEALCRVMVEGEHEDRVRTYAEDLAQVVERELR.

Serine 102 functions as the Phosphoserine intermediate in the catalytic mechanism. Mg(2+)-binding residues include serine 102, aspartate 244, aspartate 246, and aspartate 248. Serine 102 bears the Phosphoserine mark.

It belongs to the phosphohexose mutase family. Mg(2+) is required as a cofactor. Activated by phosphorylation.

The enzyme catalyses alpha-D-glucosamine 1-phosphate = D-glucosamine 6-phosphate. In terms of biological role, catalyzes the conversion of glucosamine-6-phosphate to glucosamine-1-phosphate. This chain is Phosphoglucosamine mutase, found in Desulfovibrio desulfuricans (strain ATCC 27774 / DSM 6949 / MB).